A 280-amino-acid polypeptide reads, in one-letter code: Ycf3-interacting protein 1, chloroplastic (280 aa).

A chloroplast-targeting transit peptide spans 1 to 62 (MTTQIFQLPL…NNRRFGSLIV (62 aa)). The disordered stretch occupies residues 75 to 103 (PVPLTLEQQEKEKQNRDDEEDEIDEGDVD). Acidic residues predominate over residues 91–103 (DDEEDEIDEGDVD). Residues 255-275 (ALYFVSALPVIIGISVVLILF) form a helical membrane-spanning segment.

It belongs to the Y3IP1/CEST family. As to quaternary structure, interacts with Ycf3. In terms of tissue distribution, expressed in cotyledons, rosette and cauline leaves, stems and sepals.

The protein localises to the plastid. Its subcellular location is the chloroplast thylakoid membrane. In terms of biological role, nuclear genome-encoded factor that participates in photosystem I (PSI) biogenesis. Cooperates with the plastid genome-encoded protein PSI assembly Ycf3 in the assembly of stable PSI units in the thylakoid membrane. Involved in light-induced chloroplast development and growth. Involved in the plant response to abiotic and photooxidative stresses. May be involved in the suppression of photooxidative damage. In Arabidopsis thaliana (Mouse-ear cress), this protein is Ycf3-interacting protein 1, chloroplastic.